Reading from the N-terminus, the 161-residue chain is Lipoprotein signal peptidase (161 aa).

The next 3 helical transmembrane spans lie at 9–29 (ISLL…WLIT), 63–83 (KMLF…IFYI), and 88–108 (FNLF…GNFI). Active-site residues include D118 and D136. A helical membrane pass occupies residues 131-151 (IFNIADSSLTIGVIFVIITLI).

It belongs to the peptidase A8 family.

The protein localises to the cell membrane. The enzyme catalyses Release of signal peptides from bacterial membrane prolipoproteins. Hydrolyzes -Xaa-Yaa-Zaa-|-(S,diacylglyceryl)Cys-, in which Xaa is hydrophobic (preferably Leu), and Yaa (Ala or Ser) and Zaa (Gly or Ala) have small, neutral side chains.. The protein operates within protein modification; lipoprotein biosynthesis (signal peptide cleavage). This protein specifically catalyzes the removal of signal peptides from prolipoproteins. In Staphylococcus epidermidis (strain ATCC 35984 / DSM 28319 / BCRC 17069 / CCUG 31568 / BM 3577 / RP62A), this protein is Lipoprotein signal peptidase.